The primary structure comprises 450 residues: UDP-N-acetylmuramoylalanine--D-glutamate ligase (450 aa).

119-125 (GSNGKTT) is an ATP binding site.

The protein belongs to the MurCDEF family.

It is found in the cytoplasm. It carries out the reaction UDP-N-acetyl-alpha-D-muramoyl-L-alanine + D-glutamate + ATP = UDP-N-acetyl-alpha-D-muramoyl-L-alanyl-D-glutamate + ADP + phosphate + H(+). Its pathway is cell wall biogenesis; peptidoglycan biosynthesis. Its function is as follows. Cell wall formation. Catalyzes the addition of glutamate to the nucleotide precursor UDP-N-acetylmuramoyl-L-alanine (UMA). This Streptococcus pneumoniae (strain P1031) protein is UDP-N-acetylmuramoylalanine--D-glutamate ligase.